Here is a 525-residue protein sequence, read N- to C-terminus: MSDIHEHKILILDFGSQYTQLIARRIREIGVYCELWAWDVTEAQIREFAPNGIILAGGPESVTADNSPRAPEYVFNAGVPVLGICYGMQTMSEQLGGKVIQGVGEGEFGYAQIEMLAQSALFKDIEDAVSADGKSLLDVWMSHGDKVSAIPEGFVAVAKTDTCPFAAMSCEEKRFYGVQFHPEVTHTRQGMRMLSHFALDICGCAANWKPSSIIEDAIERLKKQVGDDEVILGLSGGVDSSVVAMLLHRAIGKKLTCVFVDNGLLRLNEAKQVMEMFGDHFGLNIVHVDAENRFLDALKGEADPEAKRKIIGRVFVEIFDEEAKKCVNAKWLAQGTIYPDVIESAGSATGKAHVIKSHHNVGGLPDDMELGLVEPLRELFKDEVRKIGLELGLPYNMLYRHPFPGPGLGVRVLGEVKKEYCDLLRRADAIFIEELHKADLYNKVSQAFTVFLPVRSVGVMGDGRKYDWVVSLRAVETIDFMTAHWAHLPYDFLGRVSNRIINEIDGISRVVYDISGKPPATIEWE.

A Glutamine amidotransferase type-1 domain is found at 8 to 207 (KILILDFGSQ…ALDICGCAAN (200 aa)). Cysteine 85 acts as the Nucleophile in catalysis. Catalysis depends on residues histidine 181 and glutamate 183. The 193-residue stretch at 208–400 (WKPSSIIEDA…LGLPYNMLYR (193 aa)) folds into the GMPS ATP-PPase domain. 235–241 (SGGVDSS) contributes to the ATP binding site.

Homodimer.

The catalysed reaction is XMP + L-glutamine + ATP + H2O = GMP + L-glutamate + AMP + diphosphate + 2 H(+). It functions in the pathway purine metabolism; GMP biosynthesis; GMP from XMP (L-Gln route): step 1/1. In terms of biological role, catalyzes the synthesis of GMP from XMP. The polypeptide is GMP synthase [glutamine-hydrolyzing] (Shewanella sp. (strain ANA-3)).